A 1117-amino-acid polypeptide reads, in one-letter code: Rhoptry apical surface protein 3 (1117 aa).

Residues 1–12 (MENRPRQQTSGH) show a composition bias toward polar residues. Disordered regions lie at residues 1-27 (MENR…SRPG), 47-243 (NHER…SHFT), 258-301 (DSER…NKGI), 325-398 (SDFK…SLST), 415-442 (WNHA…FLAA), 490-572 (AEAV…ESEL), 600-619 (RPLL…ELRS), and 654-736 (QDGT…RLQG). 3 stretches are compositionally biased toward basic and acidic residues: residues 83-100 (DSNH…DSQK), 197-209 (TPLR…RHVS), and 275-300 (MKPK…DNKG). 2 stretches are compositionally biased toward low complexity: residues 418-442 (ASPG…FLAA) and 490-508 (AEAV…GDSS). The segment covering 510-520 (ESDHSGRERSR) has biased composition (basic and acidic residues). The span at 530–540 (NEITTMRSQRS) shows a compositional bias: polar residues. Positions 546 to 555 (FSREPERESD) are enriched in basic and acidic residues. A compositionally biased stretch (polar residues) spans 557-569 (GEMTPTGETSGSE). The segment covering 724-734 (DADRKQEEKRL) has biased composition (basic and acidic residues). The region spanning 752–788 (MLSVDRRLRKLHSDTAVRRMGETEFWKLYFYQVFLLM) is the BSD domain. Residues 829 to 838 (QTSGFTESDT) are compositionally biased toward polar residues. Disordered regions lie at residues 829–848 (QTSG…YGFA), 858–891 (IIPP…APEQ), 909–964 (RSPS…GDSP), 1031–1066 (SSSQ…PSHL), and 1095–1117 (GTCG…GARA). Positions 839 to 848 (SSPSPSYGFA) are enriched in low complexity. The segment covering 909-931 (RSPSLSSSSSGTTSVSARGTGSS) has biased composition (low complexity). The span at 1031-1044 (SSSQVNGRVSTSRG) shows a compositional bias: polar residues. Composition is skewed to basic and acidic residues over residues 1046–1062 (MGED…RLEG) and 1108–1117 (KGKEVQGARA).

As to quaternary structure, interacts with RASP2.

The protein resides in the cytoplasmic vesicle. Its subcellular location is the secretory vesicle. The protein localises to the rhoptry membrane. This Toxoplasma gondii (strain ATCC 50853 / GT1) protein is Rhoptry apical surface protein 3.